A 402-amino-acid polypeptide reads, in one-letter code: F-box protein At4g22390 (402 aa).

The F-box domain occupies 1 to 49; the sequence is MAECPTDLINEMFLRLRATTLVKCRVLSKPCFSLIDSPEFVSSHLRRRL.

The sequence is that of F-box protein At4g22390 from Arabidopsis thaliana (Mouse-ear cress).